A 655-amino-acid chain; its full sequence is Squalene-tetrahymanol cyclase THC1 (655 aa).

A signal peptide spans 1 to 20; that stretch reads MKKILIGLIIGLFLFSSVNA. N-linked (GlcNAc...) asparagine glycans are attached at residues Asn-23, Asn-44, Asn-69, and Asn-77. Catalysis depends on Asp-373, which acts as the Proton donor. 2 PFTB repeats span residues 393–435 and 515–562; these read IPET…GIAN and VQNS…GLLA.

It belongs to the terpene cyclase/mutase family.

The protein localises to the membrane. It catalyses the reaction tetrahymanol = squalene + H2O. Its activity is regulated as follows. 2,3-iminosqualene and N,N-dimethyldodecylamine~N-oxlde are effective inhibitors with IC(50) values of 50 and 30 nM, respectively. Its function is as follows. Squalene cyclase that catalyzes the oxygen-independent cyclization of squalene into tetrahymanol, a triterpenoid sterol with five cyclohexyl rings that is involved in membrane integrity, permeability and fluidity. The sequence is that of Squalene-tetrahymanol cyclase THC1 from Tetrahymena thermophila (strain SB210).